Consider the following 49-residue polypeptide: Small ribosomal subunit protein eS31 (49 aa).

Positions 21, 24, 39, and 42 each coordinate Zn(2+). Residues 21–42 (CPRCGNGVFLAEHEDRMSCGRC) form a C4-type zinc finger.

It belongs to the eukaryotic ribosomal protein eS31 family. In terms of assembly, part of the 30S ribosomal subunit. It depends on Zn(2+) as a cofactor.

This is Small ribosomal subunit protein eS31 from Methanothrix thermoacetophila (strain DSM 6194 / JCM 14653 / NBRC 101360 / PT) (Methanosaeta thermophila).